The chain runs to 118 residues: MICOS complex subunit MIC13 (118 aa).

At 1-7 the chain is on the mitochondrial matrix side; it reads MVPRVWS. A helical membrane pass occupies residues 8-26; the sequence is LMRFLIKGSVAGGAIYLVY. Residues 27–118 lie on the Mitochondrial intermembrane side of the membrane; it reads DQDPLGPSDK…GWEYLKERTK (92 aa).

It belongs to the MICOS complex subunit Mic13 family. As to quaternary structure, component of the mitochondrial contact site and cristae organizing system (MICOS) complex, composed of at least MICOS10/MIC10, CHCHD3/MIC19, CHCHD6/MIC25, APOO/MIC26, MICOS13/MIC13, APOOL/MIC27 and IMMT/MIC60. The MICOS complex associates with mitochondrial outer membrane proteins SAMM50, MTX1 and MTX2 (together described as components of the mitochondrial outer membrane sorting assembly machinery (SAM) complex) and DNAJC11, mitochondrial inner membrane protein TMEM11 and with HSPA9. The MICOS and SAM complexes together with DNAJC11 are part of a large protein complex spanning both membranes termed the mitochondrial intermembrane space bridging (MIB) complex.

Its subcellular location is the mitochondrion inner membrane. In terms of biological role, component of the MICOS complex, a large protein complex of the mitochondrial inner membrane that plays crucial roles in the maintenance of crista junctions, inner membrane architecture, and formation of contact sites to the outer membrane. Constituent of mature MICOS complex, it is required for the formation of cristae junction (CJ) and maintenance of cristae morphology. Required for the incorporation of MICOS10/MIC10 into the MICOS complex. This is MICOS complex subunit MIC13 from Sus scrofa (Pig).